Here is a 100-residue protein sequence, read N- to C-terminus: Aspartyl/glutamyl-tRNA(Asn/Gln) amidotransferase subunit C (100 aa).

It belongs to the GatC family. Heterotrimer of A, B and C subunits.

The enzyme catalyses L-glutamyl-tRNA(Gln) + L-glutamine + ATP + H2O = L-glutaminyl-tRNA(Gln) + L-glutamate + ADP + phosphate + H(+). It carries out the reaction L-aspartyl-tRNA(Asn) + L-glutamine + ATP + H2O = L-asparaginyl-tRNA(Asn) + L-glutamate + ADP + phosphate + 2 H(+). Its function is as follows. Allows the formation of correctly charged Asn-tRNA(Asn) or Gln-tRNA(Gln) through the transamidation of misacylated Asp-tRNA(Asn) or Glu-tRNA(Gln) in organisms which lack either or both of asparaginyl-tRNA or glutaminyl-tRNA synthetases. The reaction takes place in the presence of glutamine and ATP through an activated phospho-Asp-tRNA(Asn) or phospho-Glu-tRNA(Gln). In Streptococcus pneumoniae (strain Taiwan19F-14), this protein is Aspartyl/glutamyl-tRNA(Asn/Gln) amidotransferase subunit C.